A 266-amino-acid chain; its full sequence is Putative deoxyribonuclease tatdn3 (266 aa).

6 residues coordinate Zn(2+): histidine 9, histidine 11, glutamate 103, histidine 143, histidine 166, and aspartate 214.

It belongs to the metallo-dependent hydrolases superfamily. TatD-type hydrolase family. Requires Mn(2+) as cofactor. The cofactor is Ca(2+). Mg(2+) is required as a cofactor. Zn(2+) serves as cofactor.

The protein localises to the nucleus. With respect to regulation, the 3'-exonuclease activity is sensitive to the metal ion present in the active site, whereas the AP endodeoxyribonuclease activity is observed in a variety of divalent metal cofactors. 3'-exoxonuclease activity is suppressed in the presence of Ca(2+), Zn(2+) and Ni(2+). Exhibits 3'-exonuclease activities and apurinic/apyrimidinic (AP) endonuclease (in vitro). Show preferential AP endonuclease activity on double-stranded DNA substrates and 3'- exonuclease activity on single-stranded DNA. This Danio rerio (Zebrafish) protein is Putative deoxyribonuclease tatdn3 (tatdn3).